The chain runs to 446 residues: Ribosomal protein uS12 methylthiotransferase RimO (446 aa).

Residues 9 to 121 enclose the MTTase N-terminal domain; sequence PKVGFVSLGC…VLDAIHAALP (113 aa). Positions 18, 54, 83, 152, 156, and 159 each coordinate [4Fe-4S] cluster. Residues 138–375 form the Radical SAM core domain; it reads LTPPHYAYLK…MAVQEAISRQ (238 aa). The TRAM domain occupies 378–445; sequence QRRVGQRQRV…AHDLYGMVVS (68 aa).

It belongs to the methylthiotransferase family. RimO subfamily. [4Fe-4S] cluster serves as cofactor.

It localises to the cytoplasm. The enzyme catalyses L-aspartate(89)-[ribosomal protein uS12]-hydrogen + (sulfur carrier)-SH + AH2 + 2 S-adenosyl-L-methionine = 3-methylsulfanyl-L-aspartate(89)-[ribosomal protein uS12]-hydrogen + (sulfur carrier)-H + 5'-deoxyadenosine + L-methionine + A + S-adenosyl-L-homocysteine + 2 H(+). In terms of biological role, catalyzes the methylthiolation of an aspartic acid residue of ribosomal protein uS12. The chain is Ribosomal protein uS12 methylthiotransferase RimO from Acidithiobacillus ferrooxidans (strain ATCC 23270 / DSM 14882 / CIP 104768 / NCIMB 8455) (Ferrobacillus ferrooxidans (strain ATCC 23270)).